The sequence spans 411 residues: RING-H2 finger protein ATL65 (411 aa).

The interval 1–32 (MRFVAPPPRSGDNSPSPSPSSGISEEILSRSS) is disordered. Positions 10–21 (SGDNSPSPSPSS) are enriched in low complexity. The chain crosses the membrane as a helical span at residues 36–56 (LEFSPPLIAMVVVLAAAFLFV). Residues 156-198 (CAVCLLEFEEGDYVRTLPLCFHAFHLECIDEWLRSHPNCPLCR) form an RING-type; atypical zinc finger.

The protein belongs to the RING-type zinc finger family. ATL subfamily.

It localises to the membrane. The enzyme catalyses S-ubiquitinyl-[E2 ubiquitin-conjugating enzyme]-L-cysteine + [acceptor protein]-L-lysine = [E2 ubiquitin-conjugating enzyme]-L-cysteine + N(6)-ubiquitinyl-[acceptor protein]-L-lysine.. It functions in the pathway protein modification; protein ubiquitination. This is RING-H2 finger protein ATL65 (ATL65) from Arabidopsis thaliana (Mouse-ear cress).